A 274-amino-acid chain; its full sequence is Eukaryotic translation initiation factor 3 subunit G-2 (274 aa).

Positions 194–272 (SAVRISNLSE…LILCVEWSKP (79 aa)) constitute an RRM domain.

It belongs to the eIF-3 subunit G family. In terms of assembly, component of the eukaryotic translation initiation factor 3 (eIF-3) complex. The eIF-3 complex interacts with pix.

The protein localises to the cytoplasm. RNA-binding component of the eukaryotic translation initiation factor 3 (eIF-3) complex, which is involved in protein synthesis of a specialized repertoire of mRNAs and, together with other initiation factors, stimulates binding of mRNA and methionyl-tRNAi to the 40S ribosome. The eIF-3 complex specifically targets and initiates translation of a subset of mRNAs involved in cell proliferation. This subunit can bind 18S rRNA. The sequence is that of Eukaryotic translation initiation factor 3 subunit G-2 from Drosophila pseudoobscura pseudoobscura (Fruit fly).